Consider the following 188-residue polypeptide: Ribosome maturation factor RimM (188 aa).

The region spanning 93–166 (EDEYYDHQLI…RAVIDPPPGL (74 aa)) is the PRC barrel domain.

Belongs to the RimM family. As to quaternary structure, binds ribosomal protein uS19.

It is found in the cytoplasm. In terms of biological role, an accessory protein needed during the final step in the assembly of 30S ribosomal subunit, possibly for assembly of the head region. Essential for efficient processing of 16S rRNA. May be needed both before and after RbfA during the maturation of 16S rRNA. It has affinity for free ribosomal 30S subunits but not for 70S ribosomes. The protein is Ribosome maturation factor RimM of Streptomyces coelicolor (strain ATCC BAA-471 / A3(2) / M145).